Here is a 348-residue protein sequence, read N- to C-terminus: UDP-3-O-acylglucosamine N-acyltransferase (348 aa).

His-243 serves as the catalytic Proton acceptor.

It belongs to the transferase hexapeptide repeat family. LpxD subfamily. In terms of assembly, homotrimer.

The catalysed reaction is a UDP-3-O-[(3R)-3-hydroxyacyl]-alpha-D-glucosamine + a (3R)-hydroxyacyl-[ACP] = a UDP-2-N,3-O-bis[(3R)-3-hydroxyacyl]-alpha-D-glucosamine + holo-[ACP] + H(+). It functions in the pathway bacterial outer membrane biogenesis; LPS lipid A biosynthesis. Functionally, catalyzes the N-acylation of UDP-3-O-acylglucosamine using 3-hydroxyacyl-ACP as the acyl donor. Is involved in the biosynthesis of lipid A, a phosphorylated glycolipid that anchors the lipopolysaccharide to the outer membrane of the cell. The chain is UDP-3-O-acylglucosamine N-acyltransferase from Hahella chejuensis (strain KCTC 2396).